We begin with the raw amino-acid sequence, 278 residues long: Probable malate dehydrogenase (278 aa).

Substrate is bound by residues Arg-51 and Arg-57. NAD(+) contacts are provided by residues Asn-64 and 87–89 (VSN). 2 residues coordinate substrate: Asn-89 and Arg-120. His-144 serves as the catalytic Proton acceptor.

The protein belongs to the LDH/MDH superfamily.

It catalyses the reaction (S)-malate + NAD(+) = oxaloacetate + NADH + H(+). Catalyzes the reversible oxidation of malate to oxaloacetate. In Pseudomonas putida (strain ATCC 47054 / DSM 6125 / CFBP 8728 / NCIMB 11950 / KT2440), this protein is Probable malate dehydrogenase (mdh).